We begin with the raw amino-acid sequence, 462 residues long: Lysophospholipid acyltransferase 1 (462 aa).

Transmembrane regions (helical) follow at residues 9 to 29, 52 to 72, 84 to 104, 158 to 178, 211 to 231, 263 to 283, 353 to 373, 396 to 416, and 431 to 451; these read SIGVSVAVLRFLLCFVATIPV, FLSYLSFGFSSNLHFLVPMTI, CGIITFFLGFAYLIGCHVFYM, SLIEYFGYCLCCGSHFAGPVY, AILQAAICMALYLYLVPQYPL, YFIWSISEASIIISGLGFSGW, AVWHGLYPGYMMFFVQSALMI, IMVFINFLYTVLVLNYSAVGF, and VYYIGTIIPVGLILLSYVVPA. His-356 is a catalytic residue.

The protein belongs to the membrane-bound acyltransferase family. Expressed in roots, rosette leaves, petals, stigma, chalazal endosperm of developing seeds and vascular bundles of siliques.

It localises to the endoplasmic reticulum membrane. It catalyses the reaction a 1-acyl-sn-glycero-3-phosphocholine + an acyl-CoA = a 1,2-diacyl-sn-glycero-3-phosphocholine + CoA. The catalysed reaction is 1-(9Z-octadecenoyl)-sn-glycero-3-phosphocholine + (9Z)-octadecenoyl-CoA = 1,2-di-(9Z-octadecenoyl)-sn-glycero-3-phosphocholine + CoA. The enzyme catalyses 1-(9Z-octadecenoyl)-sn-glycero-3-phosphocholine + (9Z,12Z)-octadecadienoyl-CoA = 1-(9Z)-octadecenoyl-2-(9Z,12Z)-octadecadienoyl-sn-glycero-3-phosphocholine + CoA. It carries out the reaction (9Z,12Z,15Z)-octadecatrienoyl-CoA + 1-(9Z-octadecenoyl)-sn-glycero-3-phosphocholine = 1-(9Z-octadecaenoyl)-2-(9Z,12Z,15Z-octadecatrienoyl)-sn-glycero-3-phosphocholine + CoA. It catalyses the reaction a 1-acyl-sn-glycero-3-phosphoethanolamine + an acyl-CoA = a 1,2-diacyl-sn-glycero-3-phosphoethanolamine + CoA. The catalysed reaction is a 1-acyl-sn-glycero-3-phospho-L-serine + an acyl-CoA = a 1,2-diacyl-sn-glycero-3-phospho-L-serine + CoA. Its function is as follows. Lysophospholipid acyltransferase with broad specificity. Mediates the conversion of lysophosphatidylethanolamine (1-acyl-sn-glycero-3-phosphoethanolamine or LPE) into phosphatidylethanolamine (1,2-diacyl-sn-glycero-3-phosphoethanolamine or PE) (LPEAT activity). Catalyzes the acylation of lysophosphatidylserine (1-acyl-2-hydroxy-sn-glycero-3-phospho-L-serine or LPS) into phosphatidylserine (1,2-diacyl-sn-glycero-3-phospho-L-serine or PS) (LPSAT activity). Can convert lysophosphatidylcholine (1-acyl-sn-glycero-3-phosphocholine or LPC) into phosphatidylcholine (1,2-diacyl-sn-glycero-3-phosphocholine or PC) (LPCAT activity). Exhibits preference for C18-unsaturated acyl-CoA when transferring an acyl group to lysophosphatidylcholine. Can also utilize lysophosphatidylglycerol (LPG) as substrate in vitro. Has neither activity towards lysophosphatidic acid (LPA) nor lysophosphatidylinositol (LPI). Lysophospholipid acyltransferases catalyze the reacylation step of the phospholipid remodeling pathway also known as the Lands cycle. The primary function of the Lands cycle is to provide a route for acyl remodeling to modify fatty acid (FA) composition of phospholipids derived from the Kennedy pathway. Is involved in PC acyl editing and phosphocholine headgroup exchange between PC and diacylglycerols. This processes control the majority of acyl fluxes through PC to provide polyunsaturated fatty acids for triacylglycerols synthesis in seeds. Involved with LPCAT2 in the direct incorporation of newly synthesized fatty acids exported form the chloroplast into PC through acyl editing. The polypeptide is Lysophospholipid acyltransferase 1 (Arabidopsis thaliana (Mouse-ear cress)).